Consider the following 180-residue polypeptide: Probable chorismate pyruvate-lyase (180 aa).

Residues R73, L111, and E170 each contribute to the substrate site.

This sequence belongs to the UbiC family.

It is found in the cytoplasm. The enzyme catalyses chorismate = 4-hydroxybenzoate + pyruvate. It participates in cofactor biosynthesis; ubiquinone biosynthesis. Functionally, removes the pyruvyl group from chorismate, with concomitant aromatization of the ring, to provide 4-hydroxybenzoate (4HB) for the ubiquinone pathway. This Nitrosospira multiformis (strain ATCC 25196 / NCIMB 11849 / C 71) protein is Probable chorismate pyruvate-lyase.